A 566-amino-acid polypeptide reads, in one-letter code: Glutamate--tRNA ligase (566 aa).

Positions 105–115 (PNPDGPIHLGN) match the 'HIGH' region motif.

This sequence belongs to the class-I aminoacyl-tRNA synthetase family. Glutamate--tRNA ligase type 2 subfamily.

The protein resides in the cytoplasm. The catalysed reaction is tRNA(Glu) + L-glutamate + ATP = L-glutamyl-tRNA(Glu) + AMP + diphosphate. In terms of biological role, catalyzes the attachment of glutamate to tRNA(Glu) in a two-step reaction: glutamate is first activated by ATP to form Glu-AMP and then transferred to the acceptor end of tRNA(Glu). In Sulfurisphaera tokodaii (strain DSM 16993 / JCM 10545 / NBRC 100140 / 7) (Sulfolobus tokodaii), this protein is Glutamate--tRNA ligase.